Here is a 62-residue protein sequence, read N- to C-terminus: UPF0339 protein Atu5359 (62 aa).

This sequence belongs to the UPF0339 family.

This Agrobacterium fabrum (strain C58 / ATCC 33970) (Agrobacterium tumefaciens (strain C58)) protein is UPF0339 protein Atu5359.